The sequence spans 206 residues: Proteasome subunit beta type-2 (206 aa).

The protein belongs to the peptidase T1B family. The 26S proteasome consists of a 20S proteasome core and two 19S regulatory subunits. The 20S proteasome core is composed of 28 subunits that are arranged in four stacked rings, resulting in a barrel-shaped structure. The two end rings are each formed by seven alpha subunits, and the two central rings are each formed by seven beta subunits. The catalytic chamber with the active sites is on the inside of the barrel.

Its subcellular location is the cytoplasm. The protein resides in the nucleus. Functionally, non-catalytic component of the proteasome, a multicatalytic proteinase complex which is characterized by its ability to cleave peptides with Arg, Phe, Tyr, Leu, and Glu adjacent to the leaving group at neutral or slightly basic pH. The proteasome has an ATP-dependent proteolytic activity. The sequence is that of Proteasome subunit beta type-2 (PSB4) from Trypanosoma brucei brucei.